A 321-amino-acid polypeptide reads, in one-letter code: MECDKCGRDAVMHAAYSGAHLCDDHFCASVEKRVRRRIREDNMLPRDASPENPQTWVIGLSGGKDSVVLTHILDDTFGRDPRIELVALTIHEGIEGYRDKSVDACVELAEDLDIHHELVTYEDEFGVQMDDVVEKDPENMAACAYCGVFRRDLLERFADELGADKLLTGHNLDDEAQTALMNFFEGDLKQVAKHFDASIGDFEKRRDAGEFIPRAKPLRDVPEKEVALYAHLKDLPAHITECPHSSEAYRGEIQQLLLKLEENHPGTRHSIMAGYEELAELTAREYRGEGRVDLNDCERCGSKTAGDVCRKCRLIESIEAV.

Residue Lys204 forms a Glycyl lysine isopeptide (Lys-Gly) (interchain with G-Cter in SAMP2) linkage.

The protein belongs to the TtcA family. CTU1/NCS6/ATPBD3 subfamily. As to quaternary structure, interacts with monomeric and polymeric forms of SAMP2. Interacts with UbaA. Interacts with archaeal EF-1-alpha and Pan1. Non-sampylated protein forms a complex with archaeal CPSF1 of approximately 100 kDa. Sampylated at Lys-204 with the archaeal ubiquitin-like protein SAMP2. Polymeric chains of SAMP2 are also linked.

The protein operates within tRNA modification; 5-methoxycarbonylmethyl-2-thiouridine-tRNA biosynthesis. Required for thiolation of mcm(5)S(2)U at the wobble uridine position of tRNA specific for lysine (tRNA(Lys)). Probably acts by catalyzing adenylation of tRNA, an intermediate required for 2-thiolation. May also act as a sulfurtransferase that transfers sulfur from thiocarboxylated SAMP2 onto the uridine of tRNA at wobble position. Required for cell growth at elevated temperatures. The sequence is that of tRNA 2-thiolation protein NcsA from Haloferax volcanii (strain ATCC 29605 / DSM 3757 / JCM 8879 / NBRC 14742 / NCIMB 2012 / VKM B-1768 / DS2) (Halobacterium volcanii).